We begin with the raw amino-acid sequence, 168 residues long: Ribonuclease H (168 aa).

Positions 10–151 (NNIPVKIYTD…ADKLATNGKI (142 aa)) constitute an RNase H type-1 domain. The Mg(2+) site is built by Asp19, Glu57, Asp79, and Asp143.

It belongs to the RNase H family. As to quaternary structure, monomer. It depends on Mg(2+) as a cofactor.

It is found in the cytoplasm. The catalysed reaction is Endonucleolytic cleavage to 5'-phosphomonoester.. Its function is as follows. Endonuclease that specifically degrades the RNA of RNA-DNA hybrids. The sequence is that of Ribonuclease H from Orientia tsutsugamushi (strain Boryong) (Rickettsia tsutsugamushi).